The chain runs to 268 residues: 4-diphosphocytidyl-2-C-methyl-D-erythritol kinase (268 aa).

Residue K10 is part of the active site. ATP is bound at residue 101-111 (PTQAGLGGGST). D143 is an active-site residue.

Belongs to the GHMP kinase family. IspE subfamily.

The catalysed reaction is 4-CDP-2-C-methyl-D-erythritol + ATP = 4-CDP-2-C-methyl-D-erythritol 2-phosphate + ADP + H(+). It functions in the pathway isoprenoid biosynthesis; isopentenyl diphosphate biosynthesis via DXP pathway; isopentenyl diphosphate from 1-deoxy-D-xylulose 5-phosphate: step 3/6. Catalyzes the phosphorylation of the position 2 hydroxy group of 4-diphosphocytidyl-2C-methyl-D-erythritol. The protein is 4-diphosphocytidyl-2-C-methyl-D-erythritol kinase of Helicobacter pylori (strain ATCC 700392 / 26695) (Campylobacter pylori).